The primary structure comprises 568 residues: Tyrosine-protein kinase transforming protein Src (568 aa).

The disordered stretch occupies residues Met1 to Pro58. The N-myristoyl glycine; by host moiety is linked to residue Gly2. Residues Lys7 to His25 show a composition bias toward basic and acidic residues. In terms of domain architecture, SH3 spans Gly81–Ser142. Residues Trp148–Cys245 enclose the SH2 domain. In terms of domain architecture, Protein kinase spans Leu267–Phe520. Residues Leu273–Val281 and Lys295 contribute to the ATP site. The Proton acceptor role is filled by Asp386. Residue Tyr416 is modified to Phosphotyrosine; by autocatalysis.

It belongs to the protein kinase superfamily. Tyr protein kinase family. SRC subfamily. The phosphorylated form is termed pp60v-src.

It carries out the reaction L-tyrosyl-[protein] + ATP = O-phospho-L-tyrosyl-[protein] + ADP + H(+). Its function is as follows. This phosphoprotein, required for both the initiation and the maintenance of neoplastic transformation, is a protein kinase that catalyzes the phosphorylation of tyrosine residues in vitro. The protein is Tyrosine-protein kinase transforming protein Src (V-SRC) of Galliformes.